A 285-amino-acid chain; its full sequence is 2-methoxy-6-polyprenyl-1,4-benzoquinol methylase, mitochondrial (285 aa).

The N-terminal 30 residues, 1–30 (MKGATNLFKSMRKPTNVGNFRQFSVNQVNS), are a transit peptide targeting the mitochondrion. S-adenosyl-L-methionine-binding positions include T106, D126, 156-157 (NA), and S173.

This sequence belongs to the class I-like SAM-binding methyltransferase superfamily. MenG/UbiE family. As to quaternary structure, component of a multi-subunit COQ enzyme complex.

It is found in the mitochondrion inner membrane. It carries out the reaction a 2-methoxy-6-(all-trans-polyprenyl)benzene-1,4-diol + S-adenosyl-L-methionine = a 5-methoxy-2-methyl-3-(all-trans-polyprenyl)benzene-1,4-diol + S-adenosyl-L-homocysteine + H(+). It participates in cofactor biosynthesis; ubiquinone biosynthesis. Its function is as follows. Methyltransferase required for the conversion of 2-polyprenyl-6-methoxy-1,4-benzoquinol (DDMQH2) to 2-polyprenyl-3-methyl-6-methoxy-1,4-benzoquinol (DMQH2). The chain is 2-methoxy-6-polyprenyl-1,4-benzoquinol methylase, mitochondrial from Caenorhabditis elegans.